The primary structure comprises 149 residues: UPF0306 protein PM1958 (149 aa).

The protein belongs to the UPF0306 family.

This Pasteurella multocida (strain Pm70) protein is UPF0306 protein PM1958.